An 898-amino-acid polypeptide reads, in one-letter code: Netrin receptor UNC5A (898 aa).

A signal peptide spans 1 to 25 (MAVRPGLWPALLGIVLTAWLRGSGA). The Extracellular segment spans residues 26-361 (QQSATVANPV…TSSGPEDVAL (336 aa)). The Ig-like domain maps to 44 to 141 (PHFLVEPEDV…SGTTKSQKAY (98 aa)). Intrachain disulfides connect Cys65/Cys126, Cys77/Cys124, and Cys170/Cys221. Residues Asn107 and Asn218 are each glycosylated (N-linked (GlcNAc...) asparagine). Residues 155–234 (PLAKEVSLEQ…NIVARRRSAS (80 aa)) form the Ig-like C2-type domain. TSP type-1 domains follow at residues 242 to 296 (NGGW…TLCP) and 298 to 350 (DGSW…DLCL). Residues Trp245, Trp248, and Trp251 are each glycosylated (C-linked (Man) tryptophan). 3 cysteine pairs are disulfide-bonded: Cys254-Cys291, Cys258-Cys295, and Cys269-Cys281. C-linked (Man) tryptophan glycosylation is found at Trp301 and Trp304. Cystine bridges form between Cys310–Cys344, Cys314–Cys349, and Cys322–Cys334. The N-linked (GlcNAc...) asparagine glycan is linked to Asn343. Residues 362–382 (YIGLVAVAVCLILLLLVLVLI) traverse the membrane as a helical segment. Residues 383–898 (YCRKKEGLDS…GLFTVSEAEC (516 aa)) are Cytoplasmic-facing. The 144-residue stretch at 497–640 (NMAYGTFNFL…LGRFALVGEA (144 aa)) folds into the ZU5 domain. Residues 661 to 679 (SLEYNIRVYCLHDTHDALK) are interaction with DCC. Residues 817 to 897 (QKIITSLDPP…AGLFTVSEAE (81 aa)) enclose the Death domain.

This sequence belongs to the unc-5 family. In terms of assembly, homodimer and homooligomer. Interacts with the cytoplasmic part of DCC. Interacts with MAGED1. Interacts with PRKCABP, possibly mediating some interaction with PKC. Interacts (via extracellular domain) with FLRT2 (via extracellular domain). Interacts (via extracellular domain) with FLRT3 (via extracellular domain). Post-translationally, phosphorylated on cytoplasmic tyrosine residues. Phosphorylated by PKC in vitro. In terms of processing, proteolytically cleaved by caspases during apoptosis. The cleavage does not take place when the receptor is associated with netrin ligand. Its cleavage by caspases is required to induce apoptosis. The two extracellular TSRs of UNC5A contain WxxWxxWxxC motifs that can be C-mannosylated on all tryptophans. DPY19L1 preferentially mannosylates the first two tryptophans and DPY19L3 prefers the third. C-mannosylation by DPY19L1 is required for transport of UNC5A from the endoplasmic reticulum to the cell surface. As to expression, restricted to central nervous system.

It is found in the cell membrane. The protein localises to the membrane raft. It localises to the cell projection. The protein resides in the neuron projection. Functionally, receptor for netrin required for axon guidance. Functions in the netrin signaling pathway and promotes neurite outgrowth in response to NTN1. Mediates axon repulsion of neuronal growth cones in the developing nervous system in response to netrin. Axon repulsion in growth cones may be mediated by its association with DCC that may trigger signaling for repulsion. It also acts as a dependence receptor required for apoptosis induction when not associated with netrin ligand. This Mus musculus (Mouse) protein is Netrin receptor UNC5A (Unc5a).